Here is a 390-residue protein sequence, read N- to C-terminus: Probable tRNA sulfurtransferase (390 aa).

One can recognise a THUMP domain in the interval Glu-58–Ile-161. ATP is bound by residues Leu-179 to Ile-180, His-204 to Phe-205, Arg-261, Gly-283, and Gln-292.

This sequence belongs to the ThiI family.

It is found in the cytoplasm. The catalysed reaction is [ThiI sulfur-carrier protein]-S-sulfanyl-L-cysteine + a uridine in tRNA + 2 reduced [2Fe-2S]-[ferredoxin] + ATP + H(+) = [ThiI sulfur-carrier protein]-L-cysteine + a 4-thiouridine in tRNA + 2 oxidized [2Fe-2S]-[ferredoxin] + AMP + diphosphate. The enzyme catalyses [ThiS sulfur-carrier protein]-C-terminal Gly-Gly-AMP + S-sulfanyl-L-cysteinyl-[cysteine desulfurase] + AH2 = [ThiS sulfur-carrier protein]-C-terminal-Gly-aminoethanethioate + L-cysteinyl-[cysteine desulfurase] + A + AMP + 2 H(+). It functions in the pathway cofactor biosynthesis; thiamine diphosphate biosynthesis. Its function is as follows. Catalyzes the ATP-dependent transfer of a sulfur to tRNA to produce 4-thiouridine in position 8 of tRNAs, which functions as a near-UV photosensor. Also catalyzes the transfer of sulfur to the sulfur carrier protein ThiS, forming ThiS-thiocarboxylate. This is a step in the synthesis of thiazole, in the thiamine biosynthesis pathway. The sulfur is donated as persulfide by IscS. This chain is Probable tRNA sulfurtransferase, found in Moorella thermoacetica (strain ATCC 39073 / JCM 9320).